Consider the following 684-residue polypeptide: 77 kDa membrane protein (684 aa).

The first 30 residues, 1 to 30 (MKFKSLITTTLALGVLASTGANFNNNEASA), serve as a signal peptide directing secretion. 6 MAP repeats span residues 45–154 (GYSK…EDKK), 156–265 (DKAN…ENKA), 266–374 (KRNY…KADR), 375–474 (YVPY…TGTK), 475–584 (AKAD…KKNN), and 586–684 (SNNV…ELKF).

The protein localises to the cell membrane. Its function is as follows. Binds various plasma and ECM-proteins. This chain is 77 kDa membrane protein, found in Staphylococcus aureus (strain COL).